Consider the following 133-residue polypeptide: Ribosome-binding factor A (133 aa).

This sequence belongs to the RbfA family. In terms of assembly, monomer. Binds 30S ribosomal subunits, but not 50S ribosomal subunits or 70S ribosomes.

It localises to the cytoplasm. One of several proteins that assist in the late maturation steps of the functional core of the 30S ribosomal subunit. Associates with free 30S ribosomal subunits (but not with 30S subunits that are part of 70S ribosomes or polysomes). Required for efficient processing of 16S rRNA. May interact with the 5'-terminal helix region of 16S rRNA. This chain is Ribosome-binding factor A, found in Acinetobacter baumannii (strain ACICU).